Consider the following 536-residue polypeptide: Phosphoenolpyruvate carboxykinase (ATP) (536 aa).

Positions 63, 203, and 209 each coordinate substrate. ATP contacts are provided by residues lysine 209, histidine 228, and 244–252 (GLSGTGKTT). Mn(2+) contacts are provided by lysine 209 and histidine 228. Position 265 (aspartate 265) interacts with Mn(2+). ATP contacts are provided by residues glutamate 293, arginine 329, 445 to 446 (RI), and threonine 451. Arginine 329 lines the substrate pocket.

It belongs to the phosphoenolpyruvate carboxykinase (ATP) family. As to quaternary structure, monomer. Requires Mn(2+) as cofactor.

Its subcellular location is the cytoplasm. The enzyme catalyses oxaloacetate + ATP = phosphoenolpyruvate + ADP + CO2. Its pathway is carbohydrate biosynthesis; gluconeogenesis. Its function is as follows. Involved in the gluconeogenesis. Catalyzes the conversion of oxaloacetate (OAA) to phosphoenolpyruvate (PEP) through direct phosphoryl transfer between the nucleoside triphosphate and OAA. This is Phosphoenolpyruvate carboxykinase (ATP) from Colwellia psychrerythraea (strain 34H / ATCC BAA-681) (Vibrio psychroerythus).